The sequence spans 351 residues: uncharacterized protein (351 aa).

Mn(2+) is bound by residues aspartate 215, aspartate 226, histidine 290, glutamate 319, and glutamate 333.

The protein belongs to the peptidase M24B family. Mn(2+) is required as a cofactor.

This is an uncharacterized protein from Staphylococcus aureus (strain MSSA476).